The chain runs to 748 residues: Semaphorin-3B (748 aa).

The signal sequence occupies residues 1 to 25; it reads MGRAEAAAMIPGLALLWVAGLGDTA. A Sema domain is found at 30–512; sequence RLRLSFQELQ…SRSAVAQIAL (483 aa). Residue N82 is glycosylated (N-linked (GlcNAc...) asparagine). Residues C102 and C113 are joined by a disulfide bond. N-linked (GlcNAc...) asparagine glycosylation occurs at N124. Intrachain disulfides connect C131-C140, C268-C379, C292-C339, C515-C533, and C643-C709. The 99-residue stretch at 561–659 folds into the Ig-like C2-type domain; it reads PSTLCSGDSS…FSQPLRRLVL (99 aa). The segment at 708-748 is disordered; sequence MCRPQPGHHSVAADSRRKGRNRRMHVSELRAERGPRSAAHW. Residues 732 to 742 show a composition bias toward basic and acidic residues; sequence HVSELRAERGP.

The protein belongs to the semaphorin family.

The protein resides in the secreted. In terms of biological role, inhibits axonal extension by providing local signals to specify territories inaccessible for growing axons. The sequence is that of Semaphorin-3B (Sema3b) from Mus musculus (Mouse).